A 257-amino-acid chain; its full sequence is Putative hydro-lyase YcsI (257 aa).

The protein belongs to the D-glutamate cyclase family.

The sequence is that of Putative hydro-lyase YcsI (ycsI) from Bacillus subtilis (strain 168).